The sequence spans 369 residues: Transmembrane protein 198 (369 aa).

7 helical membrane passes run 37–57, 60–80, 93–113, 117–137, 148–168, 181–201, and 216–236; these read VVPSVVCSMCCLFGIIYCFFG, CFKAVLFLTGLMFGSVIIFLL, VEASVGIGLGIGTLCGLVTML, VGLFMVGLLLGLLVGIGTLIG, SVWVPLGVLLGLGMLFAVLTL, VFGAAVIVVATDYFVELFALV, and VCWTTWVVLGAWPALALLGVL. Residues 266-308 form a disordered region; sequence RQKEERRESSRKKKRKQPQSAQHTHAAKALHPEPAYRRKPNPI.

Belongs to the TMEM198 family.

It is found in the membrane. The sequence is that of Transmembrane protein 198 (tmem198ab) from Danio rerio (Zebrafish).